The chain runs to 484 residues: Acetaldehyde dehydrogenase (acetylating) (484 aa).

This sequence belongs to the aldehyde dehydrogenase family.

The catalysed reaction is acetaldehyde + NAD(+) + CoA = acetyl-CoA + NADH + H(+). Its pathway is organosulfur degradation; alkanesulfonate degradation. Its function is as follows. Involved in an anaerobic respiration pathway that converts the sulfonate taurine (2-aminoethanesulfonate) to ammonia, acetate and sulfide. Catalyzes the oxidation of acetaldehyde to acetyl-CoA in the presence of CoASH and NAD(+). Highly prefers NAD(+) over NADP(+). The polypeptide is Acetaldehyde dehydrogenase (acetylating) (Bilophila wadsworthia (strain 3_1_6)).